The following is a 99-amino-acid chain: Transcriptional regulator WhiB2 (99 aa).

Residues 33-90 enclose the 4Fe-4S Wbl-type domain; that stretch reads LCAQTDPEAFFPEKGGSTRDAKRVCAKCEVREQCLKWAIDHDERFGIWGGMSERERRR. [4Fe-4S] cluster contacts are provided by cysteine 34, cysteine 57, cysteine 60, and cysteine 66.

This sequence belongs to the WhiB family. The cofactor is [4Fe-4S] cluster. In terms of processing, the Fe-S cluster can be nitrosylated by nitric oxide (NO). Upon Fe-S cluster removal intramolecular disulfide bonds are formed.

The protein resides in the cytoplasm. In terms of biological role, acts as a transcriptional regulator. Probably redox-responsive. The apo- but not holo-form probably binds DNA. This chain is Transcriptional regulator WhiB2 (whiB2), found in Bifidobacterium longum (strain NCC 2705).